We begin with the raw amino-acid sequence, 250 residues long: 5-oxoprolinase subunit A (250 aa).

It belongs to the LamB/PxpA family. Forms a complex composed of PxpA, PxpB and PxpC.

It carries out the reaction 5-oxo-L-proline + ATP + 2 H2O = L-glutamate + ADP + phosphate + H(+). Its function is as follows. Catalyzes the cleavage of 5-oxoproline to form L-glutamate coupled to the hydrolysis of ATP to ADP and inorganic phosphate. This chain is 5-oxoprolinase subunit A, found in Thermus thermophilus (strain ATCC 27634 / DSM 579 / HB8).